The chain runs to 436 residues: Adenylosuccinate synthetase (436 aa).

GTP contacts are provided by residues 21-27 (GDEGKGK) and 49-51 (GHT). Residue Asp22 is the Proton acceptor of the active site. Residues Asp22 and Gly49 each contribute to the Mg(2+) site. Residues 22 to 25 (DEGK), 47 to 50 (NAGH), Thr135, Arg149, Gln230, Thr245, and Arg309 each bind IMP. His50 functions as the Proton donor in the catalytic mechanism. 305–311 (TTTGRPR) contributes to the substrate binding site. Residues Arg311, 337–339 (KVD), and 423–425 (SSG) each bind GTP.

This sequence belongs to the adenylosuccinate synthetase family. Homodimer. Requires Mg(2+) as cofactor.

The protein localises to the cytoplasm. The enzyme catalyses IMP + L-aspartate + GTP = N(6)-(1,2-dicarboxyethyl)-AMP + GDP + phosphate + 2 H(+). Its pathway is purine metabolism; AMP biosynthesis via de novo pathway; AMP from IMP: step 1/2. Functionally, plays an important role in the de novo pathway of purine nucleotide biosynthesis. Catalyzes the first committed step in the biosynthesis of AMP from IMP. The polypeptide is Adenylosuccinate synthetase (Thermoplasma volcanium (strain ATCC 51530 / DSM 4299 / JCM 9571 / NBRC 15438 / GSS1)).